The primary structure comprises 256 residues: Triosephosphate isomerase (256 aa).

9–11 (NWK) serves as a coordination point for substrate. The Electrophile role is filled by His95. Glu167 serves as the catalytic Proton acceptor. Substrate-binding positions include Gly173, Ser212, and 233–234 (GG).

Belongs to the triosephosphate isomerase family. In terms of assembly, homodimer.

It is found in the cytoplasm. It carries out the reaction D-glyceraldehyde 3-phosphate = dihydroxyacetone phosphate. It participates in carbohydrate biosynthesis; gluconeogenesis. It functions in the pathway carbohydrate degradation; glycolysis; D-glyceraldehyde 3-phosphate from glycerone phosphate: step 1/1. Its function is as follows. Involved in the gluconeogenesis. Catalyzes stereospecifically the conversion of dihydroxyacetone phosphate (DHAP) to D-glyceraldehyde-3-phosphate (G3P). The polypeptide is Triosephosphate isomerase (Proteus mirabilis (strain HI4320)).